The sequence spans 196 residues: MGLVKGNCGCYWGIKGHWSRNCSPVCEIANKNYYSRRGIAPRRTFWSVSNKSLVHLDANSLMIDYENVFYYTTDITSNKAIIESSERIRQDHGNPSVLINNAGVANGKTILEESEDERRRVFNVDILAHFSLVREFLPDMIKHNHGHIVTVASTASFLARPQLVSYSCCKTALIAFHEGLSQELRMRHNARKVRTT.

Residues Ser-47, Asp-74, Asn-101, Arg-134, Tyr-166, and Lys-170 each coordinate NADP(+). The active-site Proton acceptor is the Tyr-166. Lys-170 (lowers pKa of active site Tyr) is an active-site residue.

The protein belongs to the short-chain dehydrogenases/reductases (SDR) family.

The enzyme catalyses a primary alcohol + NAD(+) = an aldehyde + NADH + H(+). It catalyses the reaction a secondary alcohol + NAD(+) = a ketone + NADH + H(+). The protein operates within mycotoxin biosynthesis. In terms of biological role, dehydrogenase; part of the Tox1B locus, one of the 2 loci that mediate the biosynthesis of T-toxin, a family of linear polyketides 37 to 45 carbons in length, of which the major component is 41 carbons, and which leads to high virulence to maize. One of the PKSs (PKS1 or PKS2) could synthesize a precursor, used subsequently by the other PKS as starter unit, to add additional carbons. Variability in the length of the final carbon backbone C35-47 could be achieved by varying the number of condensation cycles, or use of different starter or extender units or might be due to decarboxylation of the penultimate product, catalyzed by DEC1. Additional proteins are required for the biosynthesis of T-toxin, including oxidoreductases RED1, RED2, RED3, LAM1 and OXI1, as well as esterase TOX9. This is Dehydrogenase RED3 from Cochliobolus heterostrophus (strain C4 / ATCC 48331 / race T) (Southern corn leaf blight fungus).